A 156-amino-acid chain; its full sequence is Small ribosomal subunit protein bS16 (156 aa).

Composition is skewed to low complexity over residues A113–T123 and E137–S156. The tract at residues A113–S156 is disordered.

It belongs to the bacterial ribosomal protein bS16 family.

The protein is Small ribosomal subunit protein bS16 of Mycolicibacterium smegmatis (strain ATCC 700084 / mc(2)155) (Mycobacterium smegmatis).